The following is a 464-amino-acid chain: Argininosuccinate lyase (464 aa).

This sequence belongs to the lyase 1 family. Argininosuccinate lyase subfamily.

The protein resides in the cytoplasm. It carries out the reaction 2-(N(omega)-L-arginino)succinate = fumarate + L-arginine. The protein operates within amino-acid biosynthesis; L-arginine biosynthesis; L-arginine from L-ornithine and carbamoyl phosphate: step 3/3. The sequence is that of Argininosuccinate lyase from Pseudomonas putida (strain GB-1).